Consider the following 198-residue polypeptide: Acireductone dioxygenase (198 aa).

Fe(2+)-binding residues include histidine 97, histidine 99, glutamate 103, and histidine 141. Positions 97, 99, 103, and 141 each coordinate Ni(2+).

It belongs to the acireductone dioxygenase (ARD) family. Monomer. Requires Fe(2+) as cofactor. Ni(2+) serves as cofactor.

It catalyses the reaction 1,2-dihydroxy-5-(methylsulfanyl)pent-1-en-3-one + O2 = 3-(methylsulfanyl)propanoate + CO + formate + 2 H(+). The enzyme catalyses 1,2-dihydroxy-5-(methylsulfanyl)pent-1-en-3-one + O2 = 4-methylsulfanyl-2-oxobutanoate + formate + 2 H(+). It functions in the pathway amino-acid biosynthesis; L-methionine biosynthesis via salvage pathway; L-methionine from S-methyl-5-thio-alpha-D-ribose 1-phosphate: step 5/6. Functionally, catalyzes 2 different reactions between oxygen and the acireductone 1,2-dihydroxy-3-keto-5-methylthiopentene (DHK-MTPene) depending upon the metal bound in the active site. Fe-containing acireductone dioxygenase (Fe-ARD) produces formate and 2-keto-4-methylthiobutyrate (KMTB), the alpha-ketoacid precursor of methionine in the methionine recycle pathway. Ni-containing acireductone dioxygenase (Ni-ARD) produces methylthiopropionate, carbon monoxide and formate, and does not lie on the methionine recycle pathway. The sequence is that of Acireductone dioxygenase from Synechococcus elongatus (strain ATCC 33912 / PCC 7942 / FACHB-805) (Anacystis nidulans R2).